The chain runs to 200 residues: Probable molybdenum cofactor guanylyltransferase (200 aa).

GTP contacts are provided by residues 9–11 (LAG), K21, D69, and D100. A Mg(2+)-binding site is contributed by D100.

This sequence belongs to the MobA family. The cofactor is Mg(2+).

The protein localises to the cytoplasm. It catalyses the reaction Mo-molybdopterin + GTP + H(+) = Mo-molybdopterin guanine dinucleotide + diphosphate. Its function is as follows. Transfers a GMP moiety from GTP to Mo-molybdopterin (Mo-MPT) cofactor (Moco or molybdenum cofactor) to form Mo-molybdopterin guanine dinucleotide (Mo-MGD) cofactor. This chain is Probable molybdenum cofactor guanylyltransferase, found in Bacillus cereus (strain Q1).